The following is a 1136-amino-acid chain: Mitochondrial 3' processome subunit 3 (1136 aa).

Residues 1–97 constitute a mitochondrion transit peptide; it reads MKKAWAQLER…RGLVCTTVGD (97 aa).

In terms of assembly, component of the mitochondrial 3' processome (MPsome) complex composed at least of terminal uridylyltransferase KRET1/TUT1, 3'-5' exonuclease DSS1, MPSS1, MPSS2 and MPSS3. Within the complex, interacts with KRET1.

It is found in the mitochondrion. As part of the mitochondrial 3' processome (MPsome), involved in the maturation of guided RNA (gRNA) precursors. The protein is Mitochondrial 3' processome subunit 3 of Trypanosoma brucei brucei.